Here is a 263-residue protein sequence, read N- to C-terminus: Complement C1q tumor necrosis factor-related protein 6 (263 aa).

The first 24 residues, 1–24 (MRVIMGTASLGSIWAVFLLPLVFG), serve as a signal peptide directing secretion. N-linked (GlcNAc...) asparagine glycosylation occurs at asparagine 76. The interval 80 to 123 (LKGDKGDRGPSGTPGKPGKNGTRGDRGSQGIKGDKGQAGSPGSS) is disordered. Residues 82 to 123 (GDKGDRGPSGTPGKPGKNGTRGDRGSQGIKGDKGQAGSPGSS) form the Collagen-like domain. The region spanning 124–263 (CQTHYSAFSV…SGHLIKAEDN (140 aa)) is the C1q domain.

It is found in the secreted. This Rattus norvegicus (Rat) protein is Complement C1q tumor necrosis factor-related protein 6 (C1qtnf6).